A 369-amino-acid polypeptide reads, in one-letter code: LIM homeobox transcription factor 1-beta (369 aa).

2 LIM zinc-binding domains span residues 23-73 and 82-135; these read CEGC…CKQD and CSGC…CKGD. Positions 143–196 are disordered; sequence LSSVSPDESDSVKSEDEDGDMKPAKGQGSQSKGGGDDGKDPRRPKRPRTILTTQ. A DNA-binding region (homeobox) is located at residues 186 to 245; sequence PKRPRTILTTQQRRAFKASFEVSSKPCRKVRETLAAETGLSVRVVQVWFQNQRAKMKKLA.

In terms of assembly, interacts with DHX9.

It localises to the nucleus. Transcription factor involved in the regulation of podocyte-expressed genes. Essential for the specification of dorsal limb fate at both the zeugopodal and autopodal levels. The chain is LIM homeobox transcription factor 1-beta (LMX1B) from Mesocricetus auratus (Golden hamster).